Consider the following 728-residue polypeptide: Putative ankyrin repeat protein L271 (728 aa).

ANK repeat units lie at residues 142–171 (SDVN…NIKT) and 173–198 (IYSA…DIIL). Residues 244–267 (STKSTKSSGSPKSIKPKKSNQNNN) show a composition bias toward low complexity. Residues 244 to 271 (STKSTKSSGSPKSIKPKKSNQNNNAKIN) form a disordered region. Residues 292 to 338 (TVDKMSSAKEQALNVYKEIENMENFILNKINITKKKALDKIKEIENI) are a coiled coil. 8 ANK repeats span residues 358–383 (TNTD…RQGY), 384–414 (DINK…NYEQ), 477–510 (DDLS…NINS), 514–543 (IGRS…DYSF), 547–576 (NGDT…DTKT), 594–626 (DIKT…NVSS), 630–659 (TKKT…NINS), and 663–696 (LGKT…KILI).

In Acanthamoeba polyphaga (Amoeba), this protein is Putative ankyrin repeat protein L271.